The sequence spans 679 residues: Transketolase 10 (679 aa).

A substrate-binding site is contributed by histidine 40. Thiamine diphosphate-binding positions include histidine 80 and 129 to 131; that span reads GPL. Aspartate 170 is a binding site for Mg(2+). Residues glycine 171 and asparagine 200 each coordinate thiamine diphosphate. The Mg(2+) site is built by asparagine 200 and isoleucine 202. Substrate-binding residues include histidine 277, arginine 371, and serine 398. Position 277 (histidine 277) interacts with thiamine diphosphate. Thiamine diphosphate is bound by residues glutamate 425 and phenylalanine 452. The active-site Proton donor is glutamate 425. Residues histidine 476, aspartate 484, and arginine 535 each coordinate substrate.

The protein belongs to the transketolase family. In terms of assembly, homodimer. It depends on Mg(2+) as a cofactor. The cofactor is Ca(2+). Mn(2+) serves as cofactor. Co(2+) is required as a cofactor. Requires thiamine diphosphate as cofactor. Leaves.

The enzyme catalyses D-sedoheptulose 7-phosphate + D-glyceraldehyde 3-phosphate = aldehydo-D-ribose 5-phosphate + D-xylulose 5-phosphate. Its function is as follows. Could be involved in the conversion of sugars, which are a major phenomenon in the rehydration process. Functionally, catalyzes the transfer of a two-carbon ketol group from a ketose donor to an aldose acceptor, via a covalent intermediate with the cofactor thiamine pyrophosphate. The polypeptide is Transketolase 10 (TKT10) (Craterostigma plantagineum (Blue gem)).